The primary structure comprises 290 residues: Porphobilinogen deaminase (290 aa).

At Cys237 the chain carries S-(dipyrrolylmethanemethyl)cysteine.

The protein belongs to the HMBS family. As to quaternary structure, monomer. Dipyrromethane is required as a cofactor.

The catalysed reaction is 4 porphobilinogen + H2O = hydroxymethylbilane + 4 NH4(+). It participates in porphyrin-containing compound metabolism; protoporphyrin-IX biosynthesis; coproporphyrinogen-III from 5-aminolevulinate: step 2/4. Functionally, tetrapolymerization of the monopyrrole PBG into the hydroxymethylbilane pre-uroporphyrinogen in several discrete steps. The polypeptide is Porphobilinogen deaminase (Clostridium botulinum (strain ATCC 19397 / Type A)).